The chain runs to 123 residues: Thioredoxin domain-containing protein 17 (123 aa).

A Thioredoxin domain is found at 41-123; it reads SWCPDCVTAE…DLVRMMFTED (83 aa). Residues Cys43 and Cys46 each act as nucleophile in the active site. A disulfide bridge links Cys43 with Cys46.

This sequence belongs to the thioredoxin family. Predominantly expressed in liver, brain and muscle. Also expressed in kidney, intestine, skin, stomach, gill and head kidney.

The protein localises to the cytoplasm. In terms of biological role, disulfide reductase. May participate in various redox reactions through the reversible oxidation of its active center dithiol to a disulfide and catalyze dithiol-disulfide exchange reactions. Has peroxidase activity and may contribute to the elimination of cellular hydrogen peroxide. May function as an antioxidant involved in response to viral infection. In Epinephelus coioides (Orange-spotted grouper), this protein is Thioredoxin domain-containing protein 17.